A 372-amino-acid chain; its full sequence is Glutamine synthetase (372 aa).

A GS beta-grasp domain is found at 24–103; sequence VIAEYVWVDG…VLAECFNSDG (80 aa). Residues 110 to 372 form the GS catalytic domain; the sequence is HRHEANKLFQ…KEYERETNEQ (263 aa).

The protein belongs to the glutamine synthetase family. As to quaternary structure, homooctamer.

Its subcellular location is the cytoplasm. The enzyme catalyses L-glutamate + NH4(+) + ATP = L-glutamine + ADP + phosphate + H(+). In Candida glabrata (strain ATCC 2001 / BCRC 20586 / JCM 3761 / NBRC 0622 / NRRL Y-65 / CBS 138) (Yeast), this protein is Glutamine synthetase (GLN1).